We begin with the raw amino-acid sequence, 81 residues long: Photosystem I iron-sulfur center (81 aa).

4Fe-4S ferredoxin-type domains follow at residues 2–31 and 39–68; these read SHSVKIYDTCIGCTQCVRACPTDVLEMIPW and IASAPRTEDCVGCKRCESACPTDFLSVRVY. [4Fe-4S] cluster is bound by residues Cys-11, Cys-14, Cys-17, Cys-21, Cys-48, Cys-51, Cys-54, and Cys-58.

In terms of assembly, the eukaryotic PSI reaction center is composed of at least 11 subunits. [4Fe-4S] cluster serves as cofactor.

It localises to the plastid thylakoid membrane. It catalyses the reaction reduced [plastocyanin] + hnu + oxidized [2Fe-2S]-[ferredoxin] = oxidized [plastocyanin] + reduced [2Fe-2S]-[ferredoxin]. Its function is as follows. Apoprotein for the two 4Fe-4S centers FA and FB of photosystem I (PSI); essential for photochemical activity. FB is the terminal electron acceptor of PSI, donating electrons to ferredoxin. The C-terminus interacts with PsaA/B/D and helps assemble the protein into the PSI complex. Required for binding of PsaD and PsaE to PSI. PSI is a plastocyanin-ferredoxin oxidoreductase, converting photonic excitation into a charge separation, which transfers an electron from the donor P700 chlorophyll pair to the spectroscopically characterized acceptors A0, A1, FX, FA and FB in turn. In Cuscuta reflexa (Southern Asian dodder), this protein is Photosystem I iron-sulfur center.